A 311-amino-acid chain; its full sequence is tRNA dimethylallyltransferase (311 aa).

11-18 lines the ATP pocket; sequence GPTASGKS. 13-18 serves as a coordination point for substrate; that stretch reads TASGKS. Interaction with substrate tRNA regions lie at residues 36–39 and 160–164; these read DSMQ and QRLIR.

Belongs to the IPP transferase family. As to quaternary structure, monomer. Mg(2+) is required as a cofactor.

The enzyme catalyses adenosine(37) in tRNA + dimethylallyl diphosphate = N(6)-dimethylallyladenosine(37) in tRNA + diphosphate. Functionally, catalyzes the transfer of a dimethylallyl group onto the adenine at position 37 in tRNAs that read codons beginning with uridine, leading to the formation of N6-(dimethylallyl)adenosine (i(6)A). In Rickettsia typhi (strain ATCC VR-144 / Wilmington), this protein is tRNA dimethylallyltransferase.